A 788-amino-acid polypeptide reads, in one-letter code: Endonuclease MutS2 (788 aa).

332 to 339 is an ATP binding site; sequence GPNTGGKT. One can recognise a Smr domain in the interval 713-788; that stretch reads IDLRGLDSEE…GTGVTVVELK (76 aa).

This sequence belongs to the DNA mismatch repair MutS family. MutS2 subfamily. As to quaternary structure, homodimer. Binds to stalled ribosomes, contacting rRNA.

Functionally, endonuclease that is involved in the suppression of homologous recombination and thus may have a key role in the control of bacterial genetic diversity. Its function is as follows. Acts as a ribosome collision sensor, splitting the ribosome into its 2 subunits. Detects stalled/collided 70S ribosomes which it binds and splits by an ATP-hydrolysis driven conformational change. Acts upstream of the ribosome quality control system (RQC), a ribosome-associated complex that mediates the extraction of incompletely synthesized nascent chains from stalled ribosomes and their subsequent degradation. Probably generates substrates for RQC. The polypeptide is Endonuclease MutS2 (Clostridium acetobutylicum (strain ATCC 824 / DSM 792 / JCM 1419 / IAM 19013 / LMG 5710 / NBRC 13948 / NRRL B-527 / VKM B-1787 / 2291 / W)).